We begin with the raw amino-acid sequence, 552 residues long: Indole-3-pyruvate decarboxylase (552 aa).

Glu52 is a thiamine diphosphate binding site. Residues 385 to 466 (TSAFGAIDLR…ILVLNNEGYT (82 aa)) form a thiamine pyrophosphate binding region. Mg(2+)-binding residues include Asp435 and Asn462.

The protein belongs to the TPP enzyme family. As to quaternary structure, homotetramer. A metal cation serves as cofactor. It depends on thiamine diphosphate as a cofactor.

It carries out the reaction indole-3-pyruvate + H(+) = indole-3-acetaldehyde + CO2. The protein operates within plant hormone metabolism; auxin biosynthesis. This chain is Indole-3-pyruvate decarboxylase (ipdC), found in Enterobacter cloacae.